We begin with the raw amino-acid sequence, 435 residues long: Transmembrane protease serine 4 (435 aa).

Topologically, residues 1–30 (MESDSGQPLNNRDIVPFRKPRRPQETFKKV) are cytoplasmic. Residues 31–51 (GIPIIAVLLSLIALVIVALLI) form a helical; Signal-anchor for type II membrane protein membrane-spanning segment. At 52-435 (KVILDKYYFI…WIYNVRKSEM (384 aa)) the chain is on the extracellular side. In terms of domain architecture, LDL-receptor class A spans 59–101 (YFICGSPLTFIQRGQLCDGHLDCASGEDEEHCVKDFPEKPGVA). 8 disulfide bridges follow: Cys-62-Cys-81, Cys-75-Cys-90, Cys-125-Cys-181, Cys-138-Cys-191, Cys-194-Cys-308, Cys-228-Cys-244, Cys-354-Cys-370, and Cys-381-Cys-408. Residues 102-202 (VRLSKDRSTL…DCGKSLKTPR (101 aa)) form the SRCR domain. Residues Asn-128 and Asn-176 are each glycosylated (N-linked (GlcNAc...) asparagine). In terms of domain architecture, Peptidase S1 spans 203 to 432 (VVGGVEAPVD…YLNWIYNVRK (230 aa)). Active-site charge relay system residues include His-243 and Asp-288. The active-site Charge relay system is the Ser-385.

The protein belongs to the peptidase S1 family. Proteolytically processed; probably by an autocatalytic mechanism.

The protein localises to the cell membrane. The protein resides in the secreted. In terms of biological role, plasma membrane-anchored serine protease that directly induces processing of pro-uPA/PLAU into the active form through proteolytic activity. Seems to be capable of activating ENaC. The chain is Transmembrane protease serine 4 from Mus musculus (Mouse).